Consider the following 692-residue polypeptide: Methionine--tRNA ligase (692 aa).

The 'HIGH' region signature appears at 12–22 (PYANGSFHIGH). Residues Cys-143, Cys-146, Cys-156, and Cys-159 each contribute to the Zn(2+) site. The 'KMSKS' region motif lies at 341 to 345 (KMSKS). Lys-344 lines the ATP pocket. One can recognise a tRNA-binding domain in the interval 586 to 692 (DFAKIDLRIA…PGAQPGMRVR (107 aa)).

It belongs to the class-I aminoacyl-tRNA synthetase family. MetG type 1 subfamily. Homodimer. The cofactor is Zn(2+).

The protein localises to the cytoplasm. It catalyses the reaction tRNA(Met) + L-methionine + ATP = L-methionyl-tRNA(Met) + AMP + diphosphate. Functionally, is required not only for elongation of protein synthesis but also for the initiation of all mRNA translation through initiator tRNA(fMet) aminoacylation. In Bordetella parapertussis (strain 12822 / ATCC BAA-587 / NCTC 13253), this protein is Methionine--tRNA ligase.